The following is an 850-amino-acid chain: Receptor-like serine/threonine-protein kinase SD1-8 (850 aa).

A signal peptide spans 1-26 (MRGLPNFYHSYTFFFFFLLILFPAYS). Over 27–441 (ISANTLSASE…LEDKRNRSAK (415 aa)) the chain is Extracellular. A Bulb-type lectin domain is found at 31–153 (TLSASESLTI…KNSAPDGVLW (123 aa)). Residues Asn-43, Asn-118, and Asn-242 are each glycosylated (N-linked (GlcNAc...) asparagine). The region spanning 292–328 (PKDQCDEYKECGVYGYCDSNTSPVCNCIKGFKPRNPQ) is the EGF-like domain. Intrachain disulfides connect Cys-296/Cys-308, Cys-302/Cys-316, Cys-378/Cys-403, and Cys-382/Cys-388. The region spanning 347–428 (CGGGDGFVRL…GGQDLYVRLA (82 aa)) is the PAN domain. N-linked (GlcNAc...) asparagine glycans are attached at residues Asn-387 and Asn-437. A helical transmembrane segment spans residues 442–462 (IIGSSIGVSVLLLLSFIIFFL). Residues 463–850 (WKRKQKRSIL…QITVSVLDAR (388 aa)) are Cytoplasmic-facing. Positions 526–807 (FSNANKLGQG…LMLGSESTTI (282 aa)) constitute a Protein kinase domain. ATP is bound by residues 532–540 (LGQGGFGIV) and Lys-554. A caM-binding region spans residues 615–632 (SRNSKLNWQMRFDIINGI). Asp-651 functions as the Proton acceptor in the catalytic mechanism.

It belongs to the protein kinase superfamily. Ser/Thr protein kinase family. In terms of assembly, interacts with PUB9, PUB13, PUB14 and PUB38. Expressed in the root-hypocotyl transition zone, at the base of lateral roots, axillary buds and pedicels.

It localises to the cell membrane. It catalyses the reaction L-seryl-[protein] + ATP = O-phospho-L-seryl-[protein] + ADP + H(+). The catalysed reaction is L-threonyl-[protein] + ATP = O-phospho-L-threonyl-[protein] + ADP + H(+). Functionally, involved in the regulation of cellular expansion and differentiation. This Arabidopsis thaliana (Mouse-ear cress) protein is Receptor-like serine/threonine-protein kinase SD1-8 (SD18).